A 953-amino-acid chain; its full sequence is MTQTLSQLEHHDAFIARHIGPSAPQQVHMLATVGSDSLAGLIAQIVPADIQLAAAPAVGEATTEAQALAELKAIARQNQRYKSFIGMGYSAVVTPPVILRNMLENPGWYTAYTPYQPEVSQGRLEALLNFQQLTLDLTGLDIASASLLDEATAAAEAMALAKRSSKLKQANCFFVADDVHPQTLDVLRTRAGTFGFELVIDKAQAALEHPDLFGVLLQQVGTTGELHDYRALMAELTRRKIISCVAADMLSLVLLAAPGEQGADVVFGSSQRFGVPMGYGGPHAAFFAARDEMKRAMPGRIIGVSRDAAGDTALRMVMQTREQHIRREKANSNICTSQVLLANIAGLYAVYHGPQGLKRIAGRIHRLTTILAQGLHDADLTLRHDRWFDTLTVEVVDKAGVLARANAAGINLRSDIHGAVGITLDETTVREDVQTLWQVVTGAAGTLAIDALDAGCDEVIPPELLRATPILTHEVFNRYHSETEMMRYMHRLERKDLALNQAMIPLGSCTMKLNAAAEMIPITWPEFAELHPFCPPEQAAGYQQMIAQLSRWLIQLTGYDALCMQPNSGAQGEYAGLLAIRRYHESRNQGERHICLIPSSAHGTNPASAQMAGMSVTVVACDKNGNIDLHDLRAKAEQAGEQLSCIMVTYPSTHGVYEETIREVCQIVHQYGGQVYLDGANMNAQVGITSPGYIGADVSHLNLHKTFCIPHGGGGPGMGPIGVKAHLAPFVPGHLVVELDGVLTRQGAVSAAPFGSASILPISWMYIRMMGAEGLKQASQVAILNANYIATRLQQAYPVLYTGRAGRVAHECILDIRPLKEATGISEMDIAKRLIDYGFHAPTMSFPVAGTLMVEPTESESQLELDRFIDAMLAIRAEIQQVADGVWPASDNPLVNAPYTQRELAGEWRHPYDRQIAAFPAGYGDKYWPAVKRLDDVYGDRNLFCACVPLSDY.

Position 705 is an N6-(pyridoxal phosphate)lysine (Lys-705).

This sequence belongs to the GcvP family. The glycine cleavage system is composed of four proteins: P, T, L and H. The cofactor is pyridoxal 5'-phosphate.

The enzyme catalyses N(6)-[(R)-lipoyl]-L-lysyl-[glycine-cleavage complex H protein] + glycine + H(+) = N(6)-[(R)-S(8)-aminomethyldihydrolipoyl]-L-lysyl-[glycine-cleavage complex H protein] + CO2. Functionally, the glycine cleavage system catalyzes the degradation of glycine. The P protein binds the alpha-amino group of glycine through its pyridoxal phosphate cofactor; CO(2) is released and the remaining methylamine moiety is then transferred to the lipoamide cofactor of the H protein. This chain is Glycine dehydrogenase (decarboxylating), found in Sodalis glossinidius (strain morsitans).